The chain runs to 163 residues: HTH-type transcriptional regulator IscR (163 aa).

Residues arginine 2 to asparagine 131 form the HTH rrf2-type domain. Residues leucine 28 to lysine 51 constitute a DNA-binding region (H-T-H motif). Cysteine 92, cysteine 98, and cysteine 104 together coordinate [2Fe-2S] cluster. The span at aspartate 140–arginine 149 shows a compositional bias: basic and acidic residues. A disordered region spans residues aspartate 140 to alanine 163.

The cofactor is [2Fe-2S] cluster.

In terms of biological role, regulates the transcription of several operons and genes involved in the biogenesis of Fe-S clusters and Fe-S-containing proteins. The protein is HTH-type transcriptional regulator IscR of Citrobacter koseri (strain ATCC BAA-895 / CDC 4225-83 / SGSC4696).